The primary structure comprises 671 residues: tRNA(Met) cytidine acetyltransferase TmcA (671 aa).

ATP is bound by residues glutamine 180, 202-211 (GRGKSALAGQ), and arginine 319. The 176-residue stretch at 356–531 (QTLWRSEPET…SGCYTAMALL (176 aa)) folds into the N-acetyltransferase domain. Acetyl-CoA-binding positions include 461–463 (IAV), 468–474 (QREGTGR), glutamate 499, and arginine 506.

Belongs to the RNA cytidine acetyltransferase family. TmcA subfamily.

It localises to the cytoplasm. It catalyses the reaction cytidine(34) in elongator tRNA(Met) + acetyl-CoA + ATP + H2O = N(4)-acetylcytidine(34) in elongator tRNA(Met) + ADP + phosphate + CoA + H(+). Functionally, catalyzes the formation of N(4)-acetylcytidine (ac(4)C) at the wobble position of tRNA(Met), by using acetyl-CoA as an acetyl donor and ATP (or GTP). The chain is tRNA(Met) cytidine acetyltransferase TmcA from Shigella flexneri serotype 5b (strain 8401).